We begin with the raw amino-acid sequence, 72 residues long: Heat-stable enterotoxin C (72 aa).

The first 19 residues, methionine 1–glycine 19, serve as a signal peptide directing secretion. Cystine bridges form between cysteine 60–cysteine 65, cysteine 61–cysteine 69, and cysteine 64–cysteine 72.

This sequence belongs to the heat-stable enterotoxin family.

It localises to the secreted. In terms of biological role, toxin which activates the particulate form of guanylate cyclase and increases cyclic GMP levels within the host intestinal epithelial cells. Highly toxic. The protein is Heat-stable enterotoxin C (ystC) of Yersinia enterocolitica.